The following is a 140-amino-acid chain: MASHHQLLCLNILGFRKPGISTEDYRNYMVNVHAPLVAGLMEKYGFLHFTMSHASEQSPQLMDQLYDAQFANTASYDCCVQIVFPSIECFVNMKADPYFKQTVGPDHEKFADTKRSQMMIGWFSPLLINGQQTDSLSAAE.

The 96-residue stretch at proline 18–threonine 113 folds into the EthD domain.

The protein belongs to the tpcK family.

The enzyme catalyses naphtopyrone YWA1 = norrubrofusarin + H2O + H(+). It participates in secondary metabolite biosynthesis. Dehydratase; part of the gene cluster that mediates the biosynthesis of ustilaginoidins, dimeric gamma-naphthopyrones isolated from different fungal species. The first step in the biosynthesis of ustilaginoidins is the production of gamma-naphthopyrone precursor YWA1 by the non-reducing polyketide synthase ustP, via condensation of one acetyl-CoA starter unit with 6 malonyl-CoA units. YWA1 is then probably substrate of the ustZ to yield norrubrofusarin via a dehydration reaction. A key enzyme in the biosynthetic pathway is the laccase ustL, which catalyzes the oxidative dimerization of norrubrofusarin to ustilaginoidin A. It can produce the M- and P-atropisomers in varying amounts, depending on the reaction conditions. For the biosynthesis of 3-methylustilaginoid in derivatives such as chaetochromin A, a methylated derivative of YWA1 is required. The C-methylation is considered to be catalyzed by ustM, the phosphopantetheine attachment site of which indicates that it acts on the growing polyketide chain before release of the product. For the biosynthesis of chaetochromin A, it is assumed that saturation of the D2 double bond takes place before dimerization, and is probably catalyzed by an external reductase because no candidate gene was identified within the cluster. This is Dehydratase ustZ from Ustilaginoidea virens (Rice false smut fungus).